The primary structure comprises 244 residues: Protein crossbronx (244 aa).

The region spanning 20–176 is the UBC core domain; that stretch reads QQEYKILAEY…VQKNIKESKE (157 aa). The segment at 209–244 is disordered; it reads AGRSKQTEPSAQQANGGHATGLSWVKEGEFKPLSIE.

It belongs to the ubiquitin-conjugating enzyme family. FTS subfamily.

The sequence is that of Protein crossbronx (cbx) from Drosophila erecta (Fruit fly).